The sequence spans 33 residues: Beta-theraphotoxin-Cm1a (33 aa).

Disulfide bonds link C2-C17, C9-C22, and C16-C29. A Leucine amide modification is found at L33.

It belongs to the neurotoxin 10 (Hwtx-1) family. 04 (CcoTx1) subfamily. In terms of tissue distribution, expressed by the venom gland.

The protein resides in the secreted. Functionally, inhibits many voltage-gated sodium channels and one voltage-gated calcium channel (Cav2.2/CACNA1B (IC(50)=400 nM), Nav1.2/SCN2A (IC(50)=3-70 nM), Nav1.1/SCN1A (IC(50)=523-1060 nM), Nav1.7/SCN9A (IC(50)=129.1-5120 nM), Nav1.4/SCN4A (IC(50)=263-888 nM or &gt;10 uM) and Nav1.5/SCN5A (IC(50)=188-323 nM or &gt;10 uM)). It acts by shifting the voltage dependence of channel activation to more depolarized potentials and by blocking the inward component of the sodium current. It shows moderate affinity for lipid bilayers. On Nav1.7/SCN9A, it has been shown to interact with the S3-S4 loop of domain DII (site 4). Is significantly more potent against Nav1.2/SCN2A than the other Nav channel subtypes. In vivo, this toxin causes general ataxia, lack of response to stimuli, and semiparalysis. After a few minutes, the mice are unable to stand, and breathing is reduced in rhythm and intensity. Symptoms gradually increase with progressive slowing of breathing and flaccid paralysis, death occurred within 10 to 20 minutes post injection. Animals remain totally flaccid, and no symptoms of excitatory neurotoxicity are observed. This is Beta-theraphotoxin-Cm1a from Ceratogyrus marshalli (Straighthorned baboon tarantula).